The chain runs to 317 residues: UV DNA damage endonuclease (317 aa).

It belongs to the uve1/UvsE family.

Its function is as follows. Component in a DNA repair pathway. Removal of UV LIGHT damaged nucleotides. Recognizes pyrimidine dimers and cleave a phosphodiester bond immediately 5' to the lesion. In Bacillus cereus (strain Q1), this protein is UV DNA damage endonuclease.